Consider the following 317-residue polypeptide: MERATREREKEQREQAQTNDEAQQCPECNSANVITDQSERVCEDCGLVLEDDQIDHGPEWRAFNSSERDQKSRVGAPTTKTMHDKGLTTQIDWKDKDAYGRSLDAKKRNQMNRLRKWQERIRTKDAGERNLQFALSEIDRMASALGVPRSVREVASVIYRRALKEDLIRGRSIEGVATACLYAACRQEGIPRTLEEVTEVARIDQKEIGRTYRYVAQELSLEIQPTDPKEYLPRFASDLELSEEVIAKAREIIDTSAEQGLLSGKSPSGFAAAAIYAASLLCNEKKTQREVANVANVTEVTIRNRYQEQIEAMGFGV.

Basic and acidic residues predominate over residues 1 to 14 (MERATREREKEQRE). Residues 1 to 25 (MERATREREKEQREQAQTNDEAQQC) form a disordered region. A TFIIB-type zinc finger spans residues 21–50 (EAQQCPECNSANVITDQSERVCEDCGLVLE). Zn(2+)-binding residues include Cys25, Cys28, Cys42, and Cys45. Residues 62–83 (AFNSSERDQKSRVGAPTTKTMH) form a disordered region. 2 consecutive repeat copies span residues 136–219 (SEID…AQEL) and 230–311 (EYLP…EQIE).

This sequence belongs to the TFIIB family.

Its function is as follows. Stabilizes TBP binding to an archaeal box-A promoter. Also responsible for recruiting RNA polymerase II to the pre-initiation complex (DNA-TBP-TFIIB). The sequence is that of Transcription initiation factor IIB 3 from Halobacterium salinarum (strain ATCC 700922 / JCM 11081 / NRC-1) (Halobacterium halobium).